The following is an 860-amino-acid chain: Leucine--tRNA ligase (860 aa).

The 'HIGH' region motif lies at 42 to 52 (PYPSGRLHMGH). The 'KMSKS' region signature appears at 619-623 (KMSKS). Residue Lys-622 coordinates ATP.

Belongs to the class-I aminoacyl-tRNA synthetase family.

Its subcellular location is the cytoplasm. It carries out the reaction tRNA(Leu) + L-leucine + ATP = L-leucyl-tRNA(Leu) + AMP + diphosphate. The chain is Leucine--tRNA ligase from Yersinia pseudotuberculosis serotype I (strain IP32953).